Reading from the N-terminus, the 72-residue chain is Large ribosomal subunit protein bL31 (72 aa).

Cys16, Cys18, Cys38, and Cys41 together coordinate Zn(2+).

Belongs to the bacterial ribosomal protein bL31 family. Type A subfamily. Part of the 50S ribosomal subunit. Zn(2+) is required as a cofactor.

In terms of biological role, binds the 23S rRNA. This is Large ribosomal subunit protein bL31 from Vibrio atlanticus (strain LGP32) (Vibrio splendidus (strain Mel32)).